The following is a 248-amino-acid chain: Protein GrpE (248 aa).

Residues 229–248 are disordered; it reads AAPKEDTLPAQENQSSPADS. Over residues 238–248 the composition is skewed to polar residues; sequence AQENQSSPADS.

It belongs to the GrpE family. Homodimer.

The protein localises to the cytoplasm. Participates actively in the response to hyperosmotic and heat shock by preventing the aggregation of stress-denatured proteins, in association with DnaK and GrpE. It is the nucleotide exchange factor for DnaK and may function as a thermosensor. Unfolded proteins bind initially to DnaJ; upon interaction with the DnaJ-bound protein, DnaK hydrolyzes its bound ATP, resulting in the formation of a stable complex. GrpE releases ADP from DnaK; ATP binding to DnaK triggers the release of the substrate protein, thus completing the reaction cycle. Several rounds of ATP-dependent interactions between DnaJ, DnaK and GrpE are required for fully efficient folding. In Nostoc sp. (strain PCC 7120 / SAG 25.82 / UTEX 2576), this protein is Protein GrpE.